The sequence spans 168 residues: Shikimate kinase (168 aa).

Residue 10–15 (GVGKTT) participates in ATP binding. Threonine 14 is a Mg(2+) binding site. Residues aspartate 32, arginine 56, and glycine 77 each contribute to the substrate site. ATP is bound at residue arginine 115. Arginine 133 is a substrate binding site.

Belongs to the shikimate kinase family. As to quaternary structure, monomer. It depends on Mg(2+) as a cofactor.

It is found in the cytoplasm. It carries out the reaction shikimate + ATP = 3-phosphoshikimate + ADP + H(+). Its pathway is metabolic intermediate biosynthesis; chorismate biosynthesis; chorismate from D-erythrose 4-phosphate and phosphoenolpyruvate: step 5/7. Functionally, catalyzes the specific phosphorylation of the 3-hydroxyl group of shikimic acid using ATP as a cosubstrate. The protein is Shikimate kinase of Macrococcus caseolyticus (strain JCSC5402) (Macrococcoides caseolyticum).